Reading from the N-terminus, the 368-residue chain is ICEBs1 integrase (368 aa).

Residues 61–143 (VSFPTLISIY…SLSKIFDTAV (83 aa)) form the Core-binding (CB) domain. The 199-residue stretch at 164 to 362 (KKMKFWRPEE…YPNKQKEMAD (199 aa)) folds into the Tyr recombinase domain. Catalysis depends on residues arginine 201, lysine 239, histidine 313, arginine 316, and histidine 339. Tyrosine 349 functions as the O-(3'-phospho-DNA)-tyrosine intermediate in the catalytic mechanism.

This sequence belongs to the 'phage' integrase family.

Putative integrase that is involved in the insertion of the integrative and conjugative element ICEBs1. Required for the excision of ICEBs1 from the donor cell genome and subsequent integration in the recipient cell genome. Appears not to be transferred through the mating pore. Integration of ICEBs1 involves an attachment site in the chromosome, attB, and a site in the circular form of ICEBs1, attICEBs1. The polypeptide is ICEBs1 integrase (int) (Bacillus subtilis (strain 168)).